The primary structure comprises 226 residues: Protein-L-isoaspartate O-methyltransferase (226 aa).

The active site involves S75.

Belongs to the methyltransferase superfamily. L-isoaspartyl/D-aspartyl protein methyltransferase family.

The protein localises to the cytoplasm. The catalysed reaction is [protein]-L-isoaspartate + S-adenosyl-L-methionine = [protein]-L-isoaspartate alpha-methyl ester + S-adenosyl-L-homocysteine. Its function is as follows. Catalyzes the methyl esterification of L-isoaspartyl residues in peptides and proteins that result from spontaneous decomposition of normal L-aspartyl and L-asparaginyl residues. It plays a role in the repair and/or degradation of damaged proteins. The chain is Protein-L-isoaspartate O-methyltransferase from Lawsonia intracellularis (strain PHE/MN1-00).